We begin with the raw amino-acid sequence, 509 residues long: 3-octaprenyl-4-hydroxybenzoate carboxy-lyase (509 aa).

Asparagine 179 lines the Mn(2+) pocket. Prenylated FMN contacts are provided by residues isoleucine 182 to arginine 184, arginine 196 to leucine 198, and arginine 201 to glycine 202. Residue glutamate 245 coordinates Mn(2+). Aspartate 304 (proton donor) is an active-site residue.

It belongs to the UbiD family. Homohexamer. Prenylated FMN is required as a cofactor. Requires Mn(2+) as cofactor.

It localises to the cell membrane. The enzyme catalyses a 4-hydroxy-3-(all-trans-polyprenyl)benzoate + H(+) = a 2-(all-trans-polyprenyl)phenol + CO2. It participates in cofactor biosynthesis; ubiquinone biosynthesis. Its function is as follows. Catalyzes the decarboxylation of 3-octaprenyl-4-hydroxy benzoate to 2-octaprenylphenol, an intermediate step in ubiquinone biosynthesis. The sequence is that of 3-octaprenyl-4-hydroxybenzoate carboxy-lyase from Cupriavidus pinatubonensis (strain JMP 134 / LMG 1197) (Cupriavidus necator (strain JMP 134)).